Reading from the N-terminus, the 436-residue chain is Succinyl-CoA:glutarate CoA-transferase (436 aa).

A mitochondrion-targeting transit peptide spans 1–8 (MLWMLARA). Residue aspartate 203 is the Nucleophile of the active site. N6-acetyllysine is present on residues lysine 392 and lysine 423.

It belongs to the CoA-transferase III family.

Its subcellular location is the mitochondrion. It carries out the reaction glutarate + succinyl-CoA = glutaryl-CoA + succinate. It catalyses the reaction 3-hydroxy-3-methylglutarate + succinyl-CoA = (3S)-3-hydroxy-3-methylglutaryl-CoA + succinate. The enzyme catalyses 3-hydroxy-3-methylglutarate + glutaryl-CoA = (3S)-3-hydroxy-3-methylglutaryl-CoA + glutarate. The catalysed reaction is hexanedioate + glutaryl-CoA = hexanedioyl-CoA + glutarate. It carries out the reaction itaconate + glutaryl-CoA = itaconyl-CoA + glutarate. It catalyses the reaction itaconate + succinyl-CoA = itaconyl-CoA + succinate. Its function is as follows. Coenzyme A (CoA) transferase that reversibly catalyzes the transfer of a CoA moiety from a dicarboxyl-CoA to a dicarboxylate in a metabolite recycling process. Displays preference for succinyl-CoA and glutarate-CoA as dicarboxyl-CoA donors and glutarate, succinate, adipate/hexanedioate, itaconate and 3-hydroxy-3-methylglutarate as dicarboxylate acceptors. Acts on intermediates or end products of lysine and tryptophan degradation pathway, in particular catalyzes succinyl-CoA-dependent reesterification of free glutarate into glutaryl-CoA to prevent renal excretion of glutarate. Upon inflammation, may convert macrophage-derived itaconate to itaconyl-CoA in erythroid precursors where it negatively regulates the TCA cycle and heme synthesis to limit erythroid differentiation in the context of stress erythropoiesis. This Mus musculus (Mouse) protein is Succinyl-CoA:glutarate CoA-transferase.